The following is a 411-amino-acid chain: LL-diaminopimelate aminotransferase (411 aa).

Residues Y15 and G42 each contribute to the substrate site. Pyridoxal 5'-phosphate is bound by residues Y72, 108–109 (SK), Y132, N187, Y218, and 246–248 (SFS). Substrate contacts are provided by K109, Y132, and N187. K249 is subject to N6-(pyridoxal phosphate)lysine. 2 residues coordinate pyridoxal 5'-phosphate: R257 and N292. Substrate is bound by residues N292 and R388.

Belongs to the class-I pyridoxal-phosphate-dependent aminotransferase family. LL-diaminopimelate aminotransferase subfamily. In terms of assembly, homodimer. Pyridoxal 5'-phosphate serves as cofactor.

The enzyme catalyses (2S,6S)-2,6-diaminopimelate + 2-oxoglutarate = (S)-2,3,4,5-tetrahydrodipicolinate + L-glutamate + H2O + H(+). Its pathway is amino-acid biosynthesis; L-lysine biosynthesis via DAP pathway; LL-2,6-diaminopimelate from (S)-tetrahydrodipicolinate (aminotransferase route): step 1/1. Its function is as follows. Involved in the synthesis of meso-diaminopimelate (m-DAP or DL-DAP), required for both lysine and peptidoglycan biosynthesis. Catalyzes the direct conversion of tetrahydrodipicolinate to LL-diaminopimelate. The polypeptide is LL-diaminopimelate aminotransferase (Geobacter sp. (strain M21)).